The chain runs to 118 residues: Aspartate 1-decarboxylase (118 aa).

Ser-25 (schiff-base intermediate with substrate; via pyruvic acid) is an active-site residue. Ser-25 is modified (pyruvic acid (Ser)). Thr-57 is a substrate binding site. The active-site Proton donor is Tyr-58. Residue 73-75 (GAA) participates in substrate binding.

It belongs to the PanD family. In terms of assembly, heterooctamer of four alpha and four beta subunits. It depends on pyruvate as a cofactor. Post-translationally, is synthesized initially as an inactive proenzyme, which is activated by self-cleavage at a specific serine bond to produce a beta-subunit with a hydroxyl group at its C-terminus and an alpha-subunit with a pyruvoyl group at its N-terminus.

The protein localises to the cytoplasm. It carries out the reaction L-aspartate + H(+) = beta-alanine + CO2. Its pathway is cofactor biosynthesis; (R)-pantothenate biosynthesis; beta-alanine from L-aspartate: step 1/1. In terms of biological role, catalyzes the pyruvoyl-dependent decarboxylation of aspartate to produce beta-alanine. This Porphyromonas gingivalis (strain ATCC 33277 / DSM 20709 / CIP 103683 / JCM 12257 / NCTC 11834 / 2561) protein is Aspartate 1-decarboxylase.